Reading from the N-terminus, the 179-residue chain is Acireductone dioxygenase (179 aa).

4 residues coordinate Fe(2+): His-85, His-87, Glu-91, and His-132. Residues His-85, His-87, Glu-91, and His-132 each contribute to the Ni(2+) site.

It belongs to the acireductone dioxygenase (ARD) family. Fe(2+) serves as cofactor. It depends on Ni(2+) as a cofactor.

It localises to the cytoplasm. The protein localises to the nucleus. It catalyses the reaction 1,2-dihydroxy-5-(methylsulfanyl)pent-1-en-3-one + O2 = 4-methylsulfanyl-2-oxobutanoate + formate + 2 H(+). The catalysed reaction is 1,2-dihydroxy-5-(methylsulfanyl)pent-1-en-3-one + O2 = 3-(methylsulfanyl)propanoate + CO + formate + 2 H(+). The protein operates within amino-acid biosynthesis; L-methionine biosynthesis via salvage pathway; L-methionine from S-methyl-5-thio-alpha-D-ribose 1-phosphate: step 5/6. Functionally, catalyzes 2 different reactions between oxygen and the acireductone 1,2-dihydroxy-3-keto-5-methylthiopentene (DHK-MTPene) depending upon the metal bound in the active site. Fe-containing acireductone dioxygenase (Fe-ARD) produces formate and 2-keto-4-methylthiobutyrate (KMTB), the alpha-ketoacid precursor of methionine in the methionine recycle pathway. Ni-containing acireductone dioxygenase (Ni-ARD) produces methylthiopropionate, carbon monoxide and formate, and does not lie on the methionine recycle pathway. The sequence is that of Acireductone dioxygenase from Saccharomyces cerevisiae (strain ATCC 204508 / S288c) (Baker's yeast).